Here is a 325-residue protein sequence, read N- to C-terminus: tRNA N6-adenosine threonylcarbamoyltransferase (325 aa).

Residues H110 and H114 each contribute to the Fe cation site. Residues 133–137 (MVSGG), D165, G178, and N268 each bind substrate. Fe cation is bound at residue D296.

Belongs to the KAE1 / TsaD family. Fe(2+) is required as a cofactor.

The protein localises to the cytoplasm. The enzyme catalyses L-threonylcarbamoyladenylate + adenosine(37) in tRNA = N(6)-L-threonylcarbamoyladenosine(37) in tRNA + AMP + H(+). Required for the formation of a threonylcarbamoyl group on adenosine at position 37 (t(6)A37) in tRNAs that read codons beginning with adenine. Is involved in the transfer of the threonylcarbamoyl moiety of threonylcarbamoyl-AMP (TC-AMP) to the N6 group of A37, together with TsaE and TsaB. TsaD likely plays a direct catalytic role in this reaction. The polypeptide is tRNA N6-adenosine threonylcarbamoyltransferase (Thermosipho melanesiensis (strain DSM 12029 / CIP 104789 / BI429)).